A 105-amino-acid chain; its full sequence is Neuropeptide-like protein 32 (105 aa).

Residues 1–22 form the signal peptide; sequence MRQFNLLLVFCLIALTALPVFS. A propeptide spanning residues 23-54 is cleaved from the precursor; the sequence is FPNGLTMDSIDMEPMGAFDENGAADESPRVKR. Gly-59 carries the post-translational modification Glycine amide. At Trp-64 the chain carries Tryptophan amide. Gly-68, Gly-73, and Gly-80 each carry glycine amide. Position 86 is a tryptophan amide (Trp-86). Residues Gly-91 and Gly-98 each carry the glycine amide modification. The residue at position 103 (Trp-103) is a Tryptophan amide.

The protein belongs to the YARP (YGGW-amide related peptide) family.

The protein resides in the secreted. Its function is as follows. May have antimicrobial activity. The protein is Neuropeptide-like protein 32 (nlp-32) of Caenorhabditis elegans.